Reading from the N-terminus, the 235-residue chain is Large ribosomal subunit protein uL1 (235 aa).

This sequence belongs to the universal ribosomal protein uL1 family. In terms of assembly, part of the 50S ribosomal subunit.

Its function is as follows. Binds directly to 23S rRNA. The L1 stalk is quite mobile in the ribosome, and is involved in E site tRNA release. In terms of biological role, protein L1 is also a translational repressor protein, it controls the translation of the L11 operon by binding to its mRNA. This Fervidobacterium nodosum (strain ATCC 35602 / DSM 5306 / Rt17-B1) protein is Large ribosomal subunit protein uL1.